The following is a 424-amino-acid chain: 3-phosphoshikimate 1-carboxyvinyltransferase (424 aa).

Residues K21, S22, and R26 each coordinate 3-phosphoshikimate. K21 contacts phosphoenolpyruvate. G91 and R119 together coordinate phosphoenolpyruvate. S164, Q166, D310, and K337 together coordinate 3-phosphoshikimate. Q166 lines the phosphoenolpyruvate pocket. Catalysis depends on D310, which acts as the Proton acceptor. Residues R341 and R382 each contribute to the phosphoenolpyruvate site.

This sequence belongs to the EPSP synthase family. As to quaternary structure, monomer.

It localises to the cytoplasm. The catalysed reaction is 3-phosphoshikimate + phosphoenolpyruvate = 5-O-(1-carboxyvinyl)-3-phosphoshikimate + phosphate. Its pathway is metabolic intermediate biosynthesis; chorismate biosynthesis; chorismate from D-erythrose 4-phosphate and phosphoenolpyruvate: step 6/7. In terms of biological role, catalyzes the transfer of the enolpyruvyl moiety of phosphoenolpyruvate (PEP) to the 5-hydroxyl of shikimate-3-phosphate (S3P) to produce enolpyruvyl shikimate-3-phosphate and inorganic phosphate. The polypeptide is 3-phosphoshikimate 1-carboxyvinyltransferase (Campylobacter curvus (strain 525.92)).